Consider the following 130-residue polypeptide: Protein ApaG (130 aa).

One can recognise an ApaG domain in the interval 3–127 (SAVTRGIEVT…FSLDVPEQRR (125 aa)).

The chain is Protein ApaG from Brucella canis (strain ATCC 23365 / NCTC 10854 / RM-666).